A 1106-amino-acid chain; its full sequence is Carbamoyl phosphate synthase large chain (1106 aa).

Positions 1-401 (MPKRNDLNKV…AFLKALRSLE (401 aa)) are carboxyphosphate synthetic domain. Arg-129, Arg-169, Gly-175, Gly-176, Arg-208, Val-210, Glu-215, Gly-241, Val-242, His-243, Gln-284, and Glu-298 together coordinate ATP. In terms of domain architecture, ATP-grasp 1 spans 133 to 327 (KTTMNDIGEP…IARVASKIAI (195 aa)). The Mg(2+) site is built by Gln-284, Glu-298, and Asn-300. Mn(2+) is bound by residues Gln-284, Glu-298, and Asn-300. Positions 402-577 (IDLDDLHQSI…YSAYNEENEA (176 aa)) are oligomerization domain. Residues 578–964 (IPPSEPTHDK…ALYKAMLASG (387 aa)) are carbamoyl phosphate synthetic domain. Residues 706–896 (DQLLNKLGID…MVKIATKAMM (191 aa)) form the ATP-grasp 2 domain. The ATP site is built by Arg-742, Gln-781, Leu-783, Glu-787, Gly-812, Val-813, His-814, Ser-815, Gln-855, and Glu-867. Positions 855, 867, and 869 each coordinate Mg(2+). The Mn(2+) site is built by Gln-855, Glu-867, and Asn-869. The MGS-like domain occupies 965-1106 (FSINLNGGVL…LQDYLKELSN (142 aa)). The interval 965–1106 (FSINLNGGVL…LQDYLKELSN (142 aa)) is allosteric domain.

The protein belongs to the CarB family. As to quaternary structure, composed of two chains; the small (or glutamine) chain promotes the hydrolysis of glutamine to ammonia, which is used by the large (or ammonia) chain to synthesize carbamoyl phosphate. Tetramer of heterodimers (alpha,beta)4. The cofactor is Mg(2+). Requires Mn(2+) as cofactor.

The enzyme catalyses hydrogencarbonate + L-glutamine + 2 ATP + H2O = carbamoyl phosphate + L-glutamate + 2 ADP + phosphate + 2 H(+). It catalyses the reaction hydrogencarbonate + NH4(+) + 2 ATP = carbamoyl phosphate + 2 ADP + phosphate + 2 H(+). It functions in the pathway amino-acid biosynthesis; L-arginine biosynthesis; carbamoyl phosphate from bicarbonate: step 1/1. The protein operates within pyrimidine metabolism; UMP biosynthesis via de novo pathway; (S)-dihydroorotate from bicarbonate: step 1/3. Large subunit of the glutamine-dependent carbamoyl phosphate synthetase (CPSase). CPSase catalyzes the formation of carbamoyl phosphate from the ammonia moiety of glutamine, carbonate, and phosphate donated by ATP, constituting the first step of 2 biosynthetic pathways, one leading to arginine and/or urea and the other to pyrimidine nucleotides. The large subunit (synthetase) binds the substrates ammonia (free or transferred from glutamine from the small subunit), hydrogencarbonate and ATP and carries out an ATP-coupled ligase reaction, activating hydrogencarbonate by forming carboxy phosphate which reacts with ammonia to form carbamoyl phosphate. The sequence is that of Carbamoyl phosphate synthase large chain from Natranaerobius thermophilus (strain ATCC BAA-1301 / DSM 18059 / JW/NM-WN-LF).